The sequence spans 55 residues: Large ribosomal subunit protein bL33B (55 aa).

Belongs to the bacterial ribosomal protein bL33 family.

The sequence is that of Large ribosomal subunit protein bL33B (rpmG2) from Mycobacterium tuberculosis (strain CDC 1551 / Oshkosh).